The sequence spans 504 residues: Histidine ammonia-lyase (504 aa).

The segment at residues 141–143 (ASG) is a cross-link (5-imidazolinone (Ala-Gly)). Residue serine 142 is modified to 2,3-didehydroalanine (Ser).

This sequence belongs to the PAL/histidase family. In terms of processing, contains an active site 4-methylidene-imidazol-5-one (MIO), which is formed autocatalytically by cyclization and dehydration of residues Ala-Ser-Gly.

Its subcellular location is the cytoplasm. It carries out the reaction L-histidine = trans-urocanate + NH4(+). Its pathway is amino-acid degradation; L-histidine degradation into L-glutamate; N-formimidoyl-L-glutamate from L-histidine: step 1/3. The protein is Histidine ammonia-lyase of Geobacillus thermodenitrificans (strain NG80-2).